Here is a 141-residue protein sequence, read N- to C-terminus: Large ribosomal subunit protein bL17 (141 aa).

Belongs to the bacterial ribosomal protein bL17 family. As to quaternary structure, part of the 50S ribosomal subunit. Contacts protein L32.

The protein is Large ribosomal subunit protein bL17 of Sinorhizobium medicae (strain WSM419) (Ensifer medicae).